A 336-amino-acid chain; its full sequence is Phosphate acyltransferase (336 aa).

Belongs to the PlsX family. As to quaternary structure, homodimer. Probably interacts with PlsY.

The protein localises to the cytoplasm. It catalyses the reaction a fatty acyl-[ACP] + phosphate = an acyl phosphate + holo-[ACP]. The protein operates within lipid metabolism; phospholipid metabolism. In terms of biological role, catalyzes the reversible formation of acyl-phosphate (acyl-PO(4)) from acyl-[acyl-carrier-protein] (acyl-ACP). This enzyme utilizes acyl-ACP as fatty acyl donor, but not acyl-CoA. This chain is Phosphate acyltransferase, found in Dictyoglomus thermophilum (strain ATCC 35947 / DSM 3960 / H-6-12).